Consider the following 381-residue polypeptide: DNA replication and repair protein RecF (381 aa).

30–37 (GENAQGKT) is an ATP binding site.

The protein belongs to the RecF family.

It is found in the cytoplasm. In terms of biological role, the RecF protein is involved in DNA metabolism; it is required for DNA replication and normal SOS inducibility. RecF binds preferentially to single-stranded, linear DNA. It also seems to bind ATP. This Lactobacillus delbrueckii subsp. bulgaricus (strain ATCC BAA-365 / Lb-18) protein is DNA replication and repair protein RecF.